The sequence spans 150 residues: Large ribosomal subunit protein uL15 (150 aa).

The segment at 1 to 52 is disordered; that stretch reads MITLNTLKDSTRKRKPRKRVGRGIGSKHGKTCGRGEKGAGARSGYKRRLGKE. Residues 11–31 are compositionally biased toward basic residues; the sequence is TRKRKPRKRVGRGIGSKHGKT.

Belongs to the universal ribosomal protein uL15 family. Part of the 50S ribosomal subunit.

Functionally, binds to the 23S rRNA. This Protochlamydia amoebophila (strain UWE25) protein is Large ribosomal subunit protein uL15.